We begin with the raw amino-acid sequence, 226 residues long: MNPNIAKISSLLSDPSRSSILLSLMDGRIHPAGELAYLANIKPQTASFHLNKLLEAKLISVEKHGRHRYYRLADSDAANVIEQLLHIAPKAKVKSLKESKEKKDLHFARTCYDHLAGYVGVQMAHSLVEQGMLKKVDLNFEVTSEGALFFSKLGINEEQQRNKRRAFARCCLDWSERQHHIAGALGNALLVRMLEEEWIVRMPKTRAIRITQSGKIAFEKHLNVKI.

Residues 1-92 (MNPNIAKISS…QLLHIAPKAK (92 aa)) enclose the HTH arsR-type domain. The H-T-H motif DNA-binding region spans 32-55 (AGELAYLANIKPQTASFHLNKLLE).

This is an uncharacterized protein from Bacillus subtilis (strain 168).